We begin with the raw amino-acid sequence, 1068 residues long: DNA-directed RNA polymerase subunit beta (1068 aa).

The protein belongs to the RNA polymerase beta chain family. In terms of assembly, in plastids the minimal PEP RNA polymerase catalytic core is composed of four subunits: alpha, beta, beta', and beta''. When a (nuclear-encoded) sigma factor is associated with the core the holoenzyme is formed, which can initiate transcription.

It is found in the plastid. Its subcellular location is the chloroplast. The catalysed reaction is RNA(n) + a ribonucleoside 5'-triphosphate = RNA(n+1) + diphosphate. DNA-dependent RNA polymerase catalyzes the transcription of DNA into RNA using the four ribonucleoside triphosphates as substrates. The sequence is that of DNA-directed RNA polymerase subunit beta from Staurastrum punctulatum (Green alga).